The primary structure comprises 2429 residues: Reducing polyketide synthase ppsB (2429 aa).

The Ketosynthase family 3 (KS3) domain occupies D4 to S442. Catalysis depends on for beta-ketoacyl synthase activity residues C177, H317, and H362. Positions V558–E873 are malonyl-CoA:ACP transacylase (MAT) domain. S652 serves as the catalytic For acyl/malonyl transferase activity. Residues H945 to A1075 form an N-terminal hotdog fold region. A product template (PT) domain region spans residues H945–S1227. Residues H945 to S1233 enclose the PKS/mFAS DH domain. The segment at S1090 to S1233 is C-terminal hotdog fold. Residues L1409–S2158 are methyltransferase (CMeT) domain. A Carrier domain is found at E2350–R2425. S2385 is subject to O-(pantetheine 4'-phosphoryl)serine.

It participates in secondary metabolite biosynthesis. Functionally, reducing polyketide synthase; part of the gene cluster that mediates the biosynthesis of 2,4'-dihydroxy-3'-methoxypropiophenone. The first step of the pathway is the conversion of acetate into acetyl-CoA by the acyl-CoA ligase ppsA. Acetyl-CoA is then used as a starter unit by the polyketide synthase ppsB and condensed with 4 malonyl-CoA unit to produce the pentaketide backbone. During polyketide extension, the polykedite chain is probably reduced and dehydrated by the KR and PT domains, respectively. O-methylation seems to be catalyzed by an unknown methyltransferase rather than by the CMeT domain of ppsB. Two hydroxylations and one further decarboxylation step catalyzed by yet unknown enzymes are then required to yield 4'-hydroxy-3'-methoxypropiophenone. PpsC functions as a carrier protein to transport 4'-hydroxy-3'-methoxypropiophenone to a specific cell compartment in which 4'-hydroxy-3'-methoxypropiophenone is hydroxylated to 2,4'-dihydroxy-3'-methoxypropiophenone by a still to be identified enzyme. The protein is Reducing polyketide synthase ppsB of Aspergillus oryzae (strain ATCC 42149 / RIB 40) (Yellow koji mold).